The chain runs to 425 residues: uncharacterized protein (425 aa).

In terms of domain architecture, TRAM spans 1-57 (MKDKPLKLTVEKLVYGGYGFSRLNGKAVFVRFASPKELVEAKVVKEKKDYTEAVVTK). Positions 70, 76, 79, and 153 each coordinate [4Fe-4S] cluster. S-adenosyl-L-methionine contacts are provided by Gln-260, Asp-308, and Asp-354. Residue Cys-381 is the Nucleophile of the active site.

This sequence belongs to the class I-like SAM-binding methyltransferase superfamily. RNA M5U methyltransferase family.

This is an uncharacterized protein from Aquifex aeolicus (strain VF5).